We begin with the raw amino-acid sequence, 89 residues long: MAKKSKIEKEKRIEATVAKYAAKRAALKAAGDYQGLAKLPRDASPVRAHHRDLTDGRPHAYMRAFGLSRLNFRQLAHKGQIPGVRKASW.

This sequence belongs to the universal ribosomal protein uS14 family. Part of the 30S ribosomal subunit. Contacts proteins S3 and S10.

Functionally, binds 16S rRNA, required for the assembly of 30S particles and may also be responsible for determining the conformation of the 16S rRNA at the A site. This is Small ribosomal subunit protein uS14 from Oenococcus oeni (strain ATCC BAA-331 / PSU-1).